The chain runs to 246 residues: UDP-N-acetyl-D-mannosaminuronic acid transferase (246 aa).

This sequence belongs to the glycosyltransferase 26 family.

It carries out the reaction UDP-N-acetyl-alpha-D-mannosaminouronate + N-acetyl-alpha-D-glucosaminyl-di-trans,octa-cis-undecaprenyl diphosphate = beta-D-ManNAcA-(1-&gt;4)-alpha-D-GlcNAc-di-trans,octa-cis-undecaprenyl diphosphate + UDP + H(+). Its pathway is bacterial outer membrane biogenesis; enterobacterial common antigen biosynthesis. In terms of biological role, catalyzes the synthesis of Und-PP-GlcNAc-ManNAcA (Lipid II), the second lipid-linked intermediate involved in enterobacterial common antigen (ECA) synthesis. The protein is UDP-N-acetyl-D-mannosaminuronic acid transferase of Salmonella agona (strain SL483).